The following is a 106-amino-acid chain: Minor capsid protein VP2 (106 aa).

Belongs to the vesivirus VP2 protein family. In terms of assembly, homooligomer. The portal-like structure consists in 12 copies of VP2. Interacts with capsid protein VP1.

It localises to the virion. Its subcellular location is the host cytoplasm. Its function is as follows. Minor structural protein that forms a portal-like structure at a unique three-fold axis of symmetry, following binding to the host receptor. The virion attaches to feline junctional adhesion molecule A (F11R). Once attached, the virion is endocytosed. Acidification of the endosome induces conformational change of capsid protein thereby injecting virus genomic RNA into host cytoplasm. The channel formed by VP2 may allow the delivery of the viral genome through the host endosomal membrane. The polypeptide is Minor capsid protein VP2 (Feline calicivirus (strain CFI/68 FIV) (FCV)).